Here is a 327-residue protein sequence, read N- to C-terminus: Glycerol-3-phosphate dehydrogenase [NAD(P)+] (327 aa).

Residues Trp-11, Arg-30, and Lys-103 each coordinate NADPH. Residues Lys-103, Gly-131, and Ser-133 each coordinate sn-glycerol 3-phosphate. Ala-135 lines the NADPH pocket. Lys-186, Asp-243, Ser-253, Arg-254, and Asn-255 together coordinate sn-glycerol 3-phosphate. The Proton acceptor role is filled by Lys-186. Arg-254 is an NADPH binding site. Residues Val-281 and Glu-283 each contribute to the NADPH site.

It belongs to the NAD-dependent glycerol-3-phosphate dehydrogenase family.

The protein resides in the cytoplasm. It carries out the reaction sn-glycerol 3-phosphate + NAD(+) = dihydroxyacetone phosphate + NADH + H(+). It catalyses the reaction sn-glycerol 3-phosphate + NADP(+) = dihydroxyacetone phosphate + NADPH + H(+). It participates in membrane lipid metabolism; glycerophospholipid metabolism. Catalyzes the reduction of the glycolytic intermediate dihydroxyacetone phosphate (DHAP) to sn-glycerol 3-phosphate (G3P), the key precursor for phospholipid synthesis. The polypeptide is Glycerol-3-phosphate dehydrogenase [NAD(P)+] (Wolbachia sp. subsp. Drosophila simulans (strain wRi)).